A 116-amino-acid chain; its full sequence is HTH-type transcriptional regulator AnsR (116 aa).

An HTH cro/C1-type domain is found at 6–60; that stretch reads LTELRKKKNWSLQYTADLLGIAKSTYAGYESGYRRPSLEALAMLADLFDTTCDEL. The segment at residues 17–36 is a DNA-binding region (H-T-H motif); it reads LQYTADLLGIAKSTYAGYES.

Its function is as follows. Transcriptional repressor for the ans operon coding for L-asparaginase and L-aspartase. NH4(+) may influence this repression. The polypeptide is HTH-type transcriptional regulator AnsR (ansR) (Bacillus subtilis (strain 168)).